Reading from the N-terminus, the 298-residue chain is Small ribosomal subunit biogenesis GTPase RsgA 1 (298 aa).

The 162-residue stretch at 63-224 folds into the CP-type G domain; that stretch reads QTQLVRPPVA…VADTPGFSSY (162 aa). GTP is bound by residues 112–115 and 167–175; these read AKTD and GQTGAGKST. Residues cysteine 248, cysteine 253, histidine 255, and cysteine 261 each contribute to the Zn(2+) site.

It belongs to the TRAFAC class YlqF/YawG GTPase family. RsgA subfamily. Monomer. Associates with 30S ribosomal subunit, binds 16S rRNA. It depends on Zn(2+) as a cofactor.

Its subcellular location is the cytoplasm. One of several proteins that assist in the late maturation steps of the functional core of the 30S ribosomal subunit. Helps release RbfA from mature subunits. May play a role in the assembly of ribosomal proteins into the subunit. Circularly permuted GTPase that catalyzes slow GTP hydrolysis, GTPase activity is stimulated by the 30S ribosomal subunit. This is Small ribosomal subunit biogenesis GTPase RsgA 1 from Lactiplantibacillus plantarum (strain ATCC BAA-793 / NCIMB 8826 / WCFS1) (Lactobacillus plantarum).